The primary structure comprises 160 residues: Protein FrzA (160 aa).

The region spanning 14-155 is the CheW-like domain; sequence EQEFFCFRVG…FSKLLQTARQ (142 aa).

In terms of biological role, necessary for proper aggregation of cells to form fruiting bodies. FRZ genes define a system of signal transduction analogous to the enterobacterial chemotaxis systems. The polypeptide is Protein FrzA (frzA) (Myxococcus xanthus).